Here is a 287-residue protein sequence, read N- to C-terminus: Elongation factor Ts (287 aa).

The segment at 80–83 (TDFL) is involved in Mg(2+) ion dislocation from EF-Tu.

This sequence belongs to the EF-Ts family.

It is found in the cytoplasm. Associates with the EF-Tu.GDP complex and induces the exchange of GDP to GTP. It remains bound to the aminoacyl-tRNA.EF-Tu.GTP complex up to the GTP hydrolysis stage on the ribosome. The sequence is that of Elongation factor Ts from Pseudomonas savastanoi pv. phaseolicola (strain 1448A / Race 6) (Pseudomonas syringae pv. phaseolicola (strain 1448A / Race 6)).